The chain runs to 94 residues: Aspartyl/glutamyl-tRNA(Asn/Gln) amidotransferase subunit C (94 aa).

The protein belongs to the GatC family. Heterotrimer of A, B and C subunits.

It carries out the reaction L-glutamyl-tRNA(Gln) + L-glutamine + ATP + H2O = L-glutaminyl-tRNA(Gln) + L-glutamate + ADP + phosphate + H(+). The enzyme catalyses L-aspartyl-tRNA(Asn) + L-glutamine + ATP + H2O = L-asparaginyl-tRNA(Asn) + L-glutamate + ADP + phosphate + 2 H(+). Its function is as follows. Allows the formation of correctly charged Asn-tRNA(Asn) or Gln-tRNA(Gln) through the transamidation of misacylated Asp-tRNA(Asn) or Glu-tRNA(Gln) in organisms which lack either or both of asparaginyl-tRNA or glutaminyl-tRNA synthetases. The reaction takes place in the presence of glutamine and ATP through an activated phospho-Asp-tRNA(Asn) or phospho-Glu-tRNA(Gln). The sequence is that of Aspartyl/glutamyl-tRNA(Asn/Gln) amidotransferase subunit C from Desulfitobacterium hafniense (strain DSM 10664 / DCB-2).